Consider the following 315-residue polypeptide: L-threo-3-deoxy-hexylosonate aldolase (315 aa).

50–51 (SN) is a binding site for substrate. Lysine 174 functions as the Schiff-base intermediate with substrate in the catalytic mechanism.

Belongs to the DapA family.

It carries out the reaction 2-dehydro-3-deoxy-L-galactonate = L-glyceraldehyde + pyruvate. It functions in the pathway carbohydrate acid metabolism. In terms of biological role, mediates the conversion of 2-dehydro-3-deoxy-L-galactonate to pyruvate and L-glyceraldehyde in D-galacturonate catabolic process. This is L-threo-3-deoxy-hexylosonate aldolase (lga1) from Hypocrea jecorina (Trichoderma reesei).